The sequence spans 71 residues: Small ribosomal subunit protein bS21 (71 aa).

It belongs to the bacterial ribosomal protein bS21 family.

This is Small ribosomal subunit protein bS21 from Acidithiobacillus ferrooxidans (strain ATCC 23270 / DSM 14882 / CIP 104768 / NCIMB 8455) (Ferrobacillus ferrooxidans (strain ATCC 23270)).